We begin with the raw amino-acid sequence, 640 residues long: Chaperone protein HtpG (640 aa).

The segment at 1–348 (MADVAHQETH…SNDLPLNVSR (348 aa)) is a; substrate-binding. The interval 349-565 (EILQDNKITQ…GTGMSTQMIK (217 aa)) is b. The tract at residues 566-640 (LMQAAGQPVP…LNTLLMNLAK (75 aa)) is c.

This sequence belongs to the heat shock protein 90 family. In terms of assembly, homodimer.

It localises to the cytoplasm. Functionally, molecular chaperone. Has ATPase activity. In Pseudoalteromonas atlantica (strain T6c / ATCC BAA-1087), this protein is Chaperone protein HtpG.